The chain runs to 878 residues: Interleukin-3 receptor class 2 subunit beta (878 aa).

Positions 1–22 are cleaved as a signal peptide; sequence MDQQMALTWGLCYMALVALCWG. Residues 23-440 are Extracellular-facing; that stretch reads HEVTEEEETV…SNEYTWTTDW (418 aa). Cysteines 39 and 49 form a disulfide. The N-linked (GlcNAc...) asparagine glycan is linked to asparagine 62. The cysteines at positions 78 and 95 are disulfide-linked. The 106-residue stretch at 139–244 folds into the Fibronectin type-III 1 domain; it reads PPKDIHISPS…PEVHWDSQPG (106 aa). Positions 223-244 are disordered; it reads GSSLSGRPSRWSPEVHWDSQPG. 2 disulfides stabilise this stretch: cysteine 254–cysteine 264 and cysteine 293–cysteine 310. Positions 343-438 constitute a Fibronectin type-III 2 domain; sequence QMEPPILNQT…EWSNEYTWTT (96 aa). Asparagine 350 is a glycosylation site (N-linked (GlcNAc...) asparagine). A WSXWS motif motif is present at residues 427–431; sequence WSEWS. The helical transmembrane segment at 441–462 threads the bilayer; sequence VMPTLWIVLILVFLIFTLLLAL. The Cytoplasmic segment spans residues 463–878; that stretch reads HFGRVYGYRT…AIQFFKSLKY (416 aa). The Box 1 motif motif lies at 476-484; sequence WKEKIPNPS. Disordered stretches follow at residues 539-620 and 660-709; these read LTIE…GGSL and SSLE…MASD. Polar residues predominate over residues 554–570; that stretch reads PDTTPAASSESTEQLPN. Basic and acidic residues predominate over residues 671 to 689; sequence EPKENPPVELSVEKQEARD. A phosphoserine mark is found at serine 752 and serine 754. Tyrosine 765 carries the phosphotyrosine modification. 2 disordered regions span residues 771–810 and 829–849; these read SVSQ…PHPE and PGSL…ETED.

It belongs to the type I cytokine receptor family. Type 4 subfamily. Heterodimer of an alpha and a beta subunit.

It localises to the membrane. In mouse, there are two classes of high-affinity IL3 receptors. One contains this IL3-specific beta subunit and the other contains the beta subunit also shared by high-affinity IL5 and GM-CSF receptors. The sequence is that of Interleukin-3 receptor class 2 subunit beta (Csf2rb2) from Mus musculus (Mouse).